The following is a 154-amino-acid chain: Probable prefoldin subunit 5 (154 aa).

This sequence belongs to the prefoldin subunit alpha family. In terms of assembly, heterohexamer of two PFD-alpha type and four PFD-beta type subunits. Interacts with byr1.

Its subcellular location is the cytoplasm. Functionally, binds specifically to cytosolic chaperonin (c-CPN) and transfers target proteins to it. Binds to nascent polypeptide chain and promotes folding in an environment in which there are many competing pathways for nonnative proteins. Required for normal cytoskeletal function and when bound to byr1, is involved in the regulation of sexual differentiation. The sequence is that of Probable prefoldin subunit 5 (bob1) from Schizosaccharomyces pombe (strain 972 / ATCC 24843) (Fission yeast).